Consider the following 551-residue polypeptide: Calcium-dependent protein kinase 3 (551 aa).

Positions 1 to 57 (MGNCCRSPAAAAREDVKSSHFPASAGKKKPHQARNGGVGGGGGGGGGGGGGGGAGQK) are disordered. A lipid anchor (N-myristoyl glycine) is attached at Gly-2. Positions 36-55 (GGVGGGGGGGGGGGGGGGAG) are enriched in gly residues. The 259-residue stretch at 77-335 (YALDRELGRG…AKQVLEHPWL (259 aa)) folds into the Protein kinase domain. ATP-binding positions include 83-91 (LGRGEFGVT) and Lys-106. The Proton acceptor role is filled by Asp-201. The autoinhibitory domain stretch occupies residues 341–371 (APNVPLGDIVKSRLKQFSRMNRFKRRALRVI). 4 EF-hand domains span residues 378 to 413 (EEVE…FGSH), 414 to 449 (LAES…LQRM), 450 to 485 (ANDE…DGAG), and 486 to 521 (DSME…GTDW). Residues Asp-391, Asp-393, Asp-395, Glu-402, Asp-427, Asn-429, Glu-438, Asp-463, Asp-465, Asn-467, Tyr-469, Glu-474, Asp-499, Asp-501, Asp-503, Lys-505, and Glu-510 each contribute to the Ca(2+) site.

Belongs to the protein kinase superfamily. Ser/Thr protein kinase family. CDPK subfamily. As to expression, expressed in roots and developing seeds.

The protein localises to the membrane. It carries out the reaction L-seryl-[protein] + ATP = O-phospho-L-seryl-[protein] + ADP + H(+). The enzyme catalyses L-threonyl-[protein] + ATP = O-phospho-L-threonyl-[protein] + ADP + H(+). With respect to regulation, activated by calcium. Autophosphorylation may play an important role in the regulation of the kinase activity. Its function is as follows. May play a role in signal transduction pathways that involve calcium as a second messenger. The polypeptide is Calcium-dependent protein kinase 3 (Oryza sativa subsp. japonica (Rice)).